The sequence spans 175 residues: Adenine phosphoribosyltransferase (175 aa).

It belongs to the purine/pyrimidine phosphoribosyltransferase family. As to quaternary structure, homodimer.

The protein resides in the cytoplasm. The enzyme catalyses AMP + diphosphate = 5-phospho-alpha-D-ribose 1-diphosphate + adenine. It participates in purine metabolism; AMP biosynthesis via salvage pathway; AMP from adenine: step 1/1. In terms of biological role, catalyzes a salvage reaction resulting in the formation of AMP, that is energically less costly than de novo synthesis. In Maricaulis maris (strain MCS10) (Caulobacter maris), this protein is Adenine phosphoribosyltransferase.